A 348-amino-acid polypeptide reads, in one-letter code: Rhodopsin (348 aa).

Methionine 1 bears the N-acetylmethionine mark. At 1–36 (MNGTEGPNFYVPFSNKTGVVRSPFEYPQYYLAEPWQ) the chain is on the extracellular side. N-linked (GlcNAc...) asparagine glycosylation is found at asparagine 2 and asparagine 15. A helical transmembrane segment spans residues 37 to 61 (FSMLAAYMFLLIVLGFPINFLTLYV). At 62–73 (TVQHKNVRTPLN) the chain is on the cytoplasmic side. A helical transmembrane segment spans residues 74–96 (YILLNLAVANHFMVFGGFTTTLY). The Extracellular segment spans residues 97–110 (TSLHGYFVFGSTGC). Cysteine 110 and cysteine 187 are oxidised to a cystine. Residues 111–133 (NLEGFFATLGGEIALWSLVVLAI) form a helical membrane-spanning segment. A 'Ionic lock' involved in activated form stabilization motif is present at residues 134–136 (ERY). Residues 134-152 (ERYVVVCKPMSNFRFGENH) lie on the Cytoplasmic side of the membrane. Residues 153–173 (AIMGVAFTWVMALACAAPPLV) traverse the membrane as a helical segment. Over 174-202 (GWSRYIPEGMQCSCGIDYYTLKPEVNNES) the chain is Extracellular. Glutamate 201 contacts Zn(2+). Residues 203-224 (FVIYMFVVHFTIPMTIIFFCYG) traverse the membrane as a helical segment. Over 225–252 (QLVFTVKEAAAQQQESATTQKAEKEVTR) the chain is Cytoplasmic. The helical transmembrane segment at 253–274 (MVIIMVIAFLICWVPYASVAFY) threads the bilayer. Over 275–286 (IFTHQGSDFGPI) the chain is Extracellular. Glutamine 279 provides a ligand contact to Zn(2+). Residues 287-308 (LMTLPAFFAKSSAIYNPVIYIM) form a helical membrane-spanning segment. Lysine 296 is subject to N6-(retinylidene)lysine. At 309-348 (MNKQFRNCMLTTICCGKNPFGEEEGSTTASKTETSQVAPA) the chain is on the cytoplasmic side. Residues cysteine 322 and cysteine 323 are each lipidated (S-palmitoyl cysteine). An interaction with SAG region spans residues 330–348 (EEEGSTTASKTETSQVAPA). Residue serine 334 is modified to Phosphoserine. A phosphothreonine mark is found at threonine 335 and threonine 336. Phosphoserine is present on serine 338. A phosphothreonine mark is found at threonine 340 and threonine 342. Residue serine 343 is modified to Phosphoserine.

This sequence belongs to the G-protein coupled receptor 1 family. Opsin subfamily. In terms of assembly, homodimer. May form a complex composed of RHO, GRK1 and RCVRN in a Ca(2+)-dependent manner; RCVRN prevents the interaction between GRK1 and RHO. Interacts with GRK1. Interacts (phosphorylated form) with SAG. Interacts with GNAT1. Interacts with GNAT3. SAG and G-proteins compete for a common binding site. Interacts with PRCD; the interaction promotes PRCD stability. Forms a complex with ASAP1 and ARF4. Forms a complex with ASAP1, RAB11A, Rabin8/RAB3IP, ARF4 and RAB11FIP3; the complex regulates Golgi-to-cilia rhodopsin/RHO transport in photoreceptors. In terms of processing, phosphorylated on some or all of the serine and threonine residues present in the C-terminal region. Post-translationally, contains one covalently linked retinal chromophore. Upon light absorption, the covalently bound 11-cis-retinal is converted to all-trans-retinal. After hydrolysis of the Schiff base and release of the covalently bound all-trans-retinal, active rhodopsin is regenerated by binding of a fresh molecule of 11-cis-retinal.

Its subcellular location is the membrane. It localises to the cell projection. It is found in the cilium. The protein localises to the photoreceptor outer segment. Its function is as follows. Photoreceptor required for image-forming vision at low light intensity. Required for photoreceptor cell viability after birth. Light-induced isomerization of 11-cis to all-trans retinal triggers a conformational change that activates signaling via G-proteins. Subsequent receptor phosphorylation mediates displacement of the bound G-protein alpha subunit by the arrestin SAG and terminates signaling. The protein is Rhodopsin (RHO) of Loxodonta africana (African elephant).